Consider the following 108-residue polypeptide: UPF0060 membrane protein YnfA (108 aa).

The Periplasmic segment spans residues 1–5; sequence MLKTT. Residues 6-26 traverse the membrane as a helical segment; that stretch reads LLFFVTALCEIIGCFLTWLWI. The Cytoplasmic portion of the chain corresponds to 27–30; the sequence is KRGA. Residues 31–51 form a helical membrane-spanning segment; sequence SVWWLLPAAASLALFVWLLTL. Over 52–60 the chain is Periplasmic; sequence HPAASGRVY. Residues 61-81 traverse the membrane as a helical segment; that stretch reads AAYGGVYVCTALLWLRVVDGV. Over 82–84 the chain is Cytoplasmic; the sequence is RLT. The helical transmembrane segment at 85-105 threads the bilayer; sequence VYDWCGAPIALCGMLIIVVGW. At 106–108 the chain is on the periplasmic side; it reads GRT.

It belongs to the UPF0060 family.

It is found in the cell inner membrane. The protein is UPF0060 membrane protein YnfA of Salmonella dublin (strain CT_02021853).